The sequence spans 782 residues: Translation initiation factor IF-2 (782 aa).

The segment covering Met-1–Lys-14 has biased composition (basic and acidic residues). Disordered regions lie at residues Met-1 to Tyr-106 and Ser-132 to Glu-174. Residues Ile-15 to Val-25 show a composition bias toward basic residues. Positions Asn-31–Thr-43 are enriched in polar residues. Basic and acidic residues predominate over residues Asp-44–Arg-61. Composition is skewed to polar residues over residues Gly-86–Tyr-106 and Ile-133–Ser-142. Basic and acidic residues predominate over residues Glu-143 to Gln-159. Residues Glu-280–Ser-453 form the tr-type G domain. The tract at residues Gly-289–Thr-296 is G1. GTP is bound at residue Gly-289–Thr-296. The tract at residues Gly-314–His-318 is G2. Positions Asp-335–Gly-338 are G3. GTP-binding positions include Asp-335–His-339 and Asn-389–Asp-392. Positions Asn-389–Asp-392 are G4. Positions Ser-425 to Leu-427 are G5.

The protein belongs to the TRAFAC class translation factor GTPase superfamily. Classic translation factor GTPase family. IF-2 subfamily.

Its subcellular location is the cytoplasm. One of the essential components for the initiation of protein synthesis. Protects formylmethionyl-tRNA from spontaneous hydrolysis and promotes its binding to the 30S ribosomal subunits. Also involved in the hydrolysis of GTP during the formation of the 70S ribosomal complex. This Borreliella afzelii (strain PKo) (Borrelia afzelii) protein is Translation initiation factor IF-2.